The sequence spans 187 residues: UPF0301 protein YqgE (187 aa).

The protein belongs to the UPF0301 (AlgH) family.

This chain is UPF0301 protein YqgE, found in Salmonella heidelberg (strain SL476).